The sequence spans 280 residues: NLP effector protein Pc553546 (280 aa).

The signal sequence occupies residues 1–19; the sequence is MNLVAALVLCFALLSSVRG. The short motif at 123-129 is the Hepta-peptide GHRHDWE motif element; the sequence is AGRHDWA. N-linked (GlcNAc...) asparagine glycosylation is found at N142 and N209.

This sequence belongs to the Necrosis inducing protein (NPP1) family.

The protein localises to the secreted. Its function is as follows. Secreted effector that contributes strongly to virulence during infection by P.capsici. The polypeptide is NLP effector protein Pc553546 (Phytophthora capsici).